Reading from the N-terminus, the 280-residue chain is MSQLLHLHRLSLPQSSLRFRFPPLHRRRAASSPTNSTQPPLQFRPLTVSRSQITCRFSQSDITPQFELDKAKDNRKPQKRANGIFWIILINLGIYLADHFFQVRGIKSLYLYHNFPAWYQFVTATFCHANWNHLSSNLFFLYIFGKLVEEEEGNFGLWLSYLFTGVGANLVSWLVLPRNAVSVGASGAVFGLFAISVLVKMSWDWRKILEVLILGQFVIERVMEAAQASAGLSGTIYGGYSLQTVNHIAHLSGALVGVVLVWLLSKFPSASMDQDVKKSS.

The transit peptide at 1–57 directs the protein to the chloroplast; it reads MSQLLHLHRLSLPQSSLRFRFPPLHRRRAASSPTNSTQPPLQFRPLTVSRSQITCRF. Over 58-82 the chain is Stromal; the sequence is SQSDITPQFELDKAKDNRKPQKRAN. The chain crosses the membrane as a helical span at residues 83–103; that stretch reads GIFWIILINLGIYLADHFFQV. Residues 104–117 lie on the Chloroplast intermembrane side of the membrane; the sequence is RGIKSLYLYHNFPA. A helical transmembrane segment spans residues 118-140; sequence WYQFVTATFCHANWNHLSSNLFF. The Stromal segment spans residues 141–154; the sequence is LYIFGKLVEEEEGN. Residues 155-175 form a helical membrane-spanning segment; the sequence is FGLWLSYLFTGVGANLVSWLV. Residues 176–178 lie on the Chloroplast intermembrane side of the membrane; the sequence is LPR. A helical transmembrane segment spans residues 179–199; the sequence is NAVSVGASGAVFGLFAISVLV. The Nucleophile role is filled by serine 186. At 200-243 the chain is on the stromal side; sequence KMSWDWRKILEVLILGQFVIERVMEAAQASAGLSGTIYGGYSLQ. A helical transmembrane segment spans residues 244–264; sequence TVNHIAHLSGALVGVVLVWLL. Histidine 250 serves as the catalytic Charge relay system. The Chloroplast intermembrane segment spans residues 265 to 280; sequence SKFPSASMDQDVKKSS.

Belongs to the peptidase S54 family. In terms of assembly, homooligomer.

The protein localises to the plastid. The protein resides in the chloroplast inner membrane. Its function is as follows. Rhomboid-type serine protease that catalyzes intramembrane proteolysis. May be involved in TIC22 processing during its import. In Arabidopsis thaliana (Mouse-ear cress), this protein is Rhomboid-like protein 11, chloroplastic.